The following is a 610-amino-acid chain: T-cell immunomodulatory protein (610 aa).

The N-terminal stretch at 1 to 32 is a signal peptide; the sequence is MAAGLLPSARAVLALLFLGLALLSVGPAPAQA. 8 N-linked (GlcNAc...) asparagine glycosylation sites follow: Asn-35, Asn-94, Asn-123, Asn-138, Asn-145, Asn-150, Asn-175, and Asn-241. An FG-GAP 1; atypical repeat occupies 98-135; sequence LVTSVVPGDYDGDSQMDVLLTYFPQNHSNNELGAVIFW. An FG-GAP 2; atypical repeat occupies 153–183; it reads FHDQPLIMDFNGDLIPDVFAITNESSQPQIL. The FG-GAP 3; atypical repeat unit spans residues 256-291; it reads VVGQSAFADFDGDGHMDHLLPGCEDKDCQKSAIYLM. Residues Asn-351, Asn-369, and Asn-480 are each glycosylated (N-linked (GlcNAc...) asparagine). A helical transmembrane segment spans residues 564–584; that stretch reads IVLLTAVALTGVCVFILAIIA.

It belongs to the TIP family. In terms of assembly, interacts with RUVBL1, RUVBL2 and alpha-tubulin.

It localises to the secreted. Its subcellular location is the cell membrane. Modulator of T-cell function. Has a protective effect in graft versus host disease model. The sequence is that of T-cell immunomodulatory protein from Rattus norvegicus (Rat).